We begin with the raw amino-acid sequence, 361 residues long: Outer mitochondrial transmembrane helix translocase (361 aa).

Residues 1–15 (MVHAEAFSRPLSRNE) are Mitochondrial intermembrane-facing. Residues 16–32 (VVGLIFRLTIFGAVTYF) form a helical membrane-spanning segment. Over 33-361 (TIKWMVDAID…QSVLTHVCLD (329 aa)) the chain is Cytoplasmic. 133 to 140 (GPPGCGKT) contributes to the ATP binding site. At S322 the chain carries Phosphoserine.

This sequence belongs to the AAA ATPase family. MSP1 subfamily. Interacts with GRIA2 and GRIP1 in an ATP-dependent manner. ATAD1-catalyzed ATP hydrolysis disrupts not only its binding to GRIA2 and GRIP1, but also interaction between GRIP1 and GRIA2, leading to AMPAR complex disassembly.

It localises to the mitochondrion outer membrane. The protein localises to the peroxisome membrane. It is found in the postsynaptic cell membrane. The catalysed reaction is [protein]-with a C-terminal TM segment(out) + ATP + H2O = [protein]-with a C-terminal TM segment(in) + ADP + phosphate + H(+). Functionally, outer mitochondrial translocase required to remove mislocalized tail-anchored transmembrane proteins on mitochondria. Specifically recognizes and binds tail-anchored transmembrane proteins: acts as a dislocase that mediates the ATP-dependent extraction of mistargeted tail-anchored transmembrane proteins from the mitochondrion outer membrane. Also plays a critical role in regulating the surface expression of AMPA receptors (AMPAR), thereby regulating synaptic plasticity and learning and memory. Required for NMDA-stimulated AMPAR internalization and inhibition of GRIA1 and GRIA2 recycling back to the plasma membrane; these activities are ATPase-dependent. The polypeptide is Outer mitochondrial transmembrane helix translocase (Rattus norvegicus (Rat)).